The primary structure comprises 99 residues: Co-chaperonin GroES (99 aa).

It belongs to the GroES chaperonin family. As to quaternary structure, heptamer of 7 subunits arranged in a ring. Interacts with the chaperonin GroEL.

The protein resides in the cytoplasm. In terms of biological role, together with the chaperonin GroEL, plays an essential role in assisting protein folding. The GroEL-GroES system forms a nano-cage that allows encapsulation of the non-native substrate proteins and provides a physical environment optimized to promote and accelerate protein folding. GroES binds to the apical surface of the GroEL ring, thereby capping the opening of the GroEL channel. The chain is Co-chaperonin GroES from Corynebacterium glutamicum (strain R).